Reading from the N-terminus, the 87-residue chain is Putative defensin-like protein 317 (87 aa).

The N-terminal stretch at 1 to 24 is a signal peptide; sequence MKSFLVAFLIVLVFFCVEMKIGNG. Cystine bridges form between cysteine 38–cysteine 71, cysteine 47–cysteine 80, and cysteine 56–cysteine 82.

This sequence belongs to the DEFL family.

The protein localises to the secreted. This is Putative defensin-like protein 317 from Arabidopsis thaliana (Mouse-ear cress).